Consider the following 305-residue polypeptide: Non-homologous end joining protein Ku (305 aa).

The region spanning 16 to 202 (SLVSFGISLI…KVDPEQLSLA (187 aa)) is the Ku domain. The tract at residues 263 to 305 (GEENGRKKSVSGAQHRSRRKSKGEQKLKVVRSGSSSDKRRKSA) is disordered.

Belongs to the prokaryotic Ku family. Homodimer. Interacts with LigD.

Its function is as follows. With LigD forms a non-homologous end joining (NHEJ) DNA repair enzyme, which repairs dsDNA breaks with reduced fidelity. Binds linear dsDNA with 5'- and 3'- overhangs but not closed circular dsDNA nor ssDNA. Recruits and stimulates the ligase activity of LigD. The protein is Non-homologous end joining protein Ku of Acidobacterium capsulatum (strain ATCC 51196 / DSM 11244 / BCRC 80197 / JCM 7670 / NBRC 15755 / NCIMB 13165 / 161).